A 216-amino-acid polypeptide reads, in one-letter code: Ion-translocating oxidoreductase complex subunit G (216 aa).

A helical transmembrane segment spans residues 14–34 (ALVLGSFGFLAASFVSIIYVI). Threonine 181 carries the FMN phosphoryl threonine modification.

The protein belongs to the RnfG family. In terms of assembly, the complex is composed of six subunits: RnfA, RnfB, RnfC, RnfD, RnfE and RnfG. The cofactor is FMN.

The protein localises to the cell inner membrane. In terms of biological role, part of a membrane-bound complex that couples electron transfer with translocation of ions across the membrane. This chain is Ion-translocating oxidoreductase complex subunit G, found in Buchnera aphidicola subsp. Baizongia pistaciae (strain Bp).